The primary structure comprises 499 residues: Probable cytosol aminopeptidase (499 aa).

Mn(2+) contacts are provided by lysine 269 and aspartate 274. Residue lysine 281 is part of the active site. 3 residues coordinate Mn(2+): aspartate 292, aspartate 351, and glutamate 353. Arginine 355 is a catalytic residue.

The protein belongs to the peptidase M17 family. The cofactor is Mn(2+).

The protein resides in the cytoplasm. It catalyses the reaction Release of an N-terminal amino acid, Xaa-|-Yaa-, in which Xaa is preferably Leu, but may be other amino acids including Pro although not Arg or Lys, and Yaa may be Pro. Amino acid amides and methyl esters are also readily hydrolyzed, but rates on arylamides are exceedingly low.. The catalysed reaction is Release of an N-terminal amino acid, preferentially leucine, but not glutamic or aspartic acids.. Presumably involved in the processing and regular turnover of intracellular proteins. Catalyzes the removal of unsubstituted N-terminal amino acids from various peptides. This is Probable cytosol aminopeptidase from Haemophilus ducreyi (strain 35000HP / ATCC 700724).